Reading from the N-terminus, the 449-residue chain is 23S rRNA (uracil(1939)-C(5))-methyltransferase RlmD (449 aa).

The 59-residue stretch at 12-70 folds into the TRAM domain; it reads SKQLSAKQSFSVHQLDHLGAGIAQHQGKVVFIPGALPNETVQAQLTEQKKNYARAKLIK. [4Fe-4S] cluster contacts are provided by Cys83, Cys89, Cys92, and Cys170. Residues Gln282, Phe311, Asn316, Glu332, Asp359, and Asp379 each coordinate S-adenosyl-L-methionine. The Nucleophile role is filled by Cys405.

The protein belongs to the class I-like SAM-binding methyltransferase superfamily. RNA M5U methyltransferase family. RlmD subfamily.

The enzyme catalyses uridine(1939) in 23S rRNA + S-adenosyl-L-methionine = 5-methyluridine(1939) in 23S rRNA + S-adenosyl-L-homocysteine + H(+). Catalyzes the formation of 5-methyl-uridine at position 1939 (m5U1939) in 23S rRNA. This is 23S rRNA (uracil(1939)-C(5))-methyltransferase RlmD from Shewanella sp. (strain ANA-3).